Consider the following 515-residue polypeptide: MAISKVWISLLLALAVVLSAPAARAEEAAAAEEAAAAPEAVLTLHADNFDDAIAKHPFILVEFYAPWCGHCKSLAPEYEKAAQLLSKHDPAIVLAKVDANDEKNKPLAGKYEVQGFPTLKIFRSGGKNIQEYKGPREAEGIVEYLKKQVGPASKEIKAPEDATYLEDGKIHIVGVFTEFSGTEFTNFLELAEKLRSDYDFGHTVHANHLPRGDAAVERPLVRLFKPFDELVVDSKDFDVSALEKFIDASSTPKVVTFDKNPDNHPYLLKYFQSNAPKAMLFLNFSTGPFESFKSAYYGAVEEFSGKDVKFLIGDIEASQGAFQYNGLKEDQAPLILIQDSDSKKFLKEQVEAGQIVAWLKDYFDGKLTPFRKSEPIPEANNEPVKVVVADNIHDVVFKSAKNVLIEFYAPWCGHCKKLAPILDEAAATLQSEEDVVIAKIDATANDVPGEFDVQGYPTLYFVTPSGKKVSYEGGRTADEIVDYIKKNKETAGQAAAAATEKAAEPAATEPLKDEL.

An N-terminal signal peptide occupies residues 1–25 (MAISKVWISLLLALAVVLSAPAARA). The Thioredoxin 1 domain occupies 26-150 (EEAAAAEEAA…IVEYLKKQVG (125 aa)). Catalysis depends on nucleophile residues cysteine 68 and cysteine 71. Cysteine 68 and cysteine 71 are disulfide-bonded. N-linked (GlcNAc...) asparagine glycosylation is present at asparagine 283. The region spanning 346 to 489 (LKEQVEAGQI…IVDYIKKNKE (144 aa)) is the Thioredoxin 2 domain. Residues cysteine 412 and cysteine 415 each act as nucleophile in the active site. Cysteine 412 and cysteine 415 are oxidised to a cystine. Low complexity predominate over residues 494 to 509 (AAAAATEKAAEPAATE). The interval 494 to 515 (AAAAATEKAAEPAATEPLKDEL) is disordered. The Prevents secretion from ER signature appears at 512-515 (KDEL).

The protein belongs to the protein disulfide isomerase family.

It localises to the endoplasmic reticulum lumen. It carries out the reaction Catalyzes the rearrangement of -S-S- bonds in proteins.. Functionally, participates in the folding of proteins containing disulfide bonds, may be involved in glycosylation, prolyl hydroxylation and triglyceride transfer. This chain is Protein disulfide-isomerase (PDI), found in Triticum aestivum (Wheat).